A 565-amino-acid polypeptide reads, in one-letter code: Periplasmic trehalase (565 aa).

Positions 1-30 (MKSPAPSRPQKMALIPACIFLCFAALSVQA) are cleaved as a signal peptide. Residues R152, 159-160 (WD), N196, 205-207 (RSQ), 277-279 (RPE), and G310 contribute to the substrate site. Catalysis depends on proton donor/acceptor residues D312 and E496. E511 lines the substrate pocket. The interval 539-565 (CDNVPATRPLSESTTQPLKQKEAEPTP) is disordered.

It belongs to the glycosyl hydrolase 37 family. Monomer.

The protein resides in the periplasm. The enzyme catalyses alpha,alpha-trehalose + H2O = alpha-D-glucose + beta-D-glucose. Provides the cells with the ability to utilize trehalose at high osmolarity by splitting it into glucose molecules that can subsequently be taken up by the phosphotransferase-mediated uptake system. The protein is Periplasmic trehalase of Escherichia coli O45:K1 (strain S88 / ExPEC).